A 114-amino-acid polypeptide reads, in one-letter code: Probable acid stress chaperone HdeA (114 aa).

The signal sequence occupies residues 1–26 (MIKTLFNKNTALAAVAILALSGSAMA). C46 and C94 are joined by a disulfide.

This sequence belongs to the HdeA family.

It is found in the periplasm. Required for optimal acid stress protection. Exhibits a chaperone-like activity only at low pH by suppressing non-specifically the aggregation of denaturated periplasmic proteins. This is Probable acid stress chaperone HdeA from Brucella ovis (strain ATCC 25840 / 63/290 / NCTC 10512).